The chain runs to 206 residues: Large ribosomal subunit protein uL4 (206 aa).

The segment at 49 to 73 (KTKTISEISGTTKKPFAQKGGGRAR) is disordered.

Belongs to the universal ribosomal protein uL4 family. In terms of assembly, part of the 50S ribosomal subunit.

One of the primary rRNA binding proteins, this protein initially binds near the 5'-end of the 23S rRNA. It is important during the early stages of 50S assembly. It makes multiple contacts with different domains of the 23S rRNA in the assembled 50S subunit and ribosome. In terms of biological role, forms part of the polypeptide exit tunnel. The protein is Large ribosomal subunit protein uL4 of Paramagnetospirillum magneticum (strain ATCC 700264 / AMB-1) (Magnetospirillum magneticum).